The sequence spans 101 residues: Urease subunit beta (101 aa).

Belongs to the urease beta subunit family. As to quaternary structure, heterotrimer of UreA (gamma), UreB (beta) and UreC (alpha) subunits. Three heterotrimers associate to form the active enzyme.

It localises to the cytoplasm. It carries out the reaction urea + 2 H2O + H(+) = hydrogencarbonate + 2 NH4(+). It participates in nitrogen metabolism; urea degradation; CO(2) and NH(3) from urea (urease route): step 1/1. The sequence is that of Urease subunit beta from Rhizobium etli (strain CIAT 652).